An 89-amino-acid polypeptide reads, in one-letter code: Large ribosomal subunit protein uL30 (89 aa).

This sequence belongs to the universal ribosomal protein uL30 family. Part of the 50S ribosomal subunit.

The polypeptide is Large ribosomal subunit protein uL30 (Myxococcus xanthus (strain DK1622)).